A 388-amino-acid chain; its full sequence is Mannitol-1-phosphate 5-dehydrogenase (388 aa).

5–16 (AIQFGGGNIGRG) serves as a coordination point for NAD(+). K213 is a catalytic residue.

The protein belongs to the mannitol dehydrogenase family. As to quaternary structure, monomer.

It catalyses the reaction D-mannitol 1-phosphate + NAD(+) = beta-D-fructose 6-phosphate + NADH + H(+). Functionally, catalyzes the NAD(H)-dependent interconversion of D-fructose 6-phosphate and D-mannitol 1-phosphate in the mannitol metabolic pathway. The chain is Mannitol-1-phosphate 5-dehydrogenase (mpdA) from Aspergillus fumigatus (strain CBS 144.89 / FGSC A1163 / CEA10) (Neosartorya fumigata).